We begin with the raw amino-acid sequence, 357 residues long: DNA replication and repair protein RecF (357 aa).

30–37 (GANGSGKT) lines the ATP pocket.

This sequence belongs to the RecF family.

It localises to the cytoplasm. The RecF protein is involved in DNA metabolism; it is required for DNA replication and normal SOS inducibility. RecF binds preferentially to single-stranded, linear DNA. It also seems to bind ATP. The sequence is that of DNA replication and repair protein RecF from Salmonella paratyphi B (strain ATCC BAA-1250 / SPB7).